Consider the following 129-residue polypeptide: Small ribosomal subunit protein uS8my (129 aa).

The protein belongs to the universal ribosomal protein uS8 family. Component of the mitochondrial ribosome small subunit.

Its subcellular location is the mitochondrion. This Arabidopsis thaliana (Mouse-ear cress) protein is Small ribosomal subunit protein uS8my (RPS15AE).